The following is a 324-amino-acid chain: Acetyl-coenzyme A carboxylase carboxyl transferase subunit alpha (324 aa).

The CoA carboxyltransferase C-terminal domain occupies Arg-41–Lys-291.

Belongs to the AccA family. In terms of assembly, acetyl-CoA carboxylase is a heterohexamer composed of biotin carboxyl carrier protein (AccB), biotin carboxylase (AccC) and two subunits each of ACCase subunit alpha (AccA) and ACCase subunit beta (AccD).

It is found in the cytoplasm. The enzyme catalyses N(6)-carboxybiotinyl-L-lysyl-[protein] + acetyl-CoA = N(6)-biotinyl-L-lysyl-[protein] + malonyl-CoA. Its pathway is lipid metabolism; malonyl-CoA biosynthesis; malonyl-CoA from acetyl-CoA: step 1/1. Functionally, component of the acetyl coenzyme A carboxylase (ACC) complex. First, biotin carboxylase catalyzes the carboxylation of biotin on its carrier protein (BCCP) and then the CO(2) group is transferred by the carboxyltransferase to acetyl-CoA to form malonyl-CoA. In Chlamydia muridarum (strain MoPn / Nigg), this protein is Acetyl-coenzyme A carboxylase carboxyl transferase subunit alpha.